The primary structure comprises 115 residues: uncharacterized protein (115 aa).

Residues Met1–Gln74 are disordered.

This is an uncharacterized protein from Homo sapiens (Human).